A 297-amino-acid chain; its full sequence is Protoheme IX farnesyltransferase 1 (297 aa).

9 helical membrane passes run 23-43 (VVVL…RAGV), 45-65 (WSVL…AAAV), 93-113 (LPAL…LLMF), 117-137 (LTAW…TGFL), 145-165 (IVIG…AVSG), 171-191 (PLLL…ALAI), 216-236 (LHIL…YAIH), 241-261 (LYLV…WVLY), and 277-297 (IGYL…LLNL).

It belongs to the UbiA prenyltransferase family. Protoheme IX farnesyltransferase subfamily.

The protein localises to the cell inner membrane. It catalyses the reaction heme b + (2E,6E)-farnesyl diphosphate + H2O = Fe(II)-heme o + diphosphate. The protein operates within porphyrin-containing compound metabolism; heme O biosynthesis; heme O from protoheme: step 1/1. In terms of biological role, converts heme B (protoheme IX) to heme O by substitution of the vinyl group on carbon 2 of heme B porphyrin ring with a hydroxyethyl farnesyl side group. This chain is Protoheme IX farnesyltransferase 1, found in Pseudomonas putida (strain W619).